Reading from the N-terminus, the 447-residue chain is DNA primase DnaG (447 aa).

The Toprim domain maps to 200–274 (DSIIVVEGRA…DIDYVARAPE (75 aa)). The Mg(2+) site is built by E206, D248, and D250. The tract at residues 316–339 (ERRRGGARKQEYTKKGSLNPQPQV) is disordered.

It belongs to the archaeal DnaG primase family. In terms of assembly, forms a ternary complex with MCM helicase and DNA. Component of the archaeal exosome complex. Mg(2+) serves as cofactor.

It catalyses the reaction ssDNA + n NTP = ssDNA/pppN(pN)n-1 hybrid + (n-1) diphosphate.. Its function is as follows. RNA polymerase that catalyzes the synthesis of short RNA molecules used as primers for DNA polymerase during DNA replication. Also part of the exosome, which is a complex involved in RNA degradation. Acts as a poly(A)-binding protein that enhances the interaction between heteromeric, adenine-rich transcripts and the exosome. This is DNA primase DnaG from Pyrococcus furiosus (strain ATCC 43587 / DSM 3638 / JCM 8422 / Vc1).